A 721-amino-acid chain; its full sequence is Polyribonucleotide nucleotidyltransferase (721 aa).

Positions 487 and 493 each coordinate Mg(2+). The region spanning 554-613 (PRIETFKIPTDKIREVIGTGGKVIREIVEKTGAKVNIDDDGTVKVASSDGESIKAAIKWI) is the KH domain. Residues 623-691 (NAIYDGTVVK…DRGKTRLSMK (69 aa)) form the S1 motif domain. The disordered stretch occupies residues 697–721 (TGEDLEAKQKAEAEKAKAEGAPAAE). The span at 701-714 (LEAKQKAEAEKAKA) shows a compositional bias: basic and acidic residues.

This sequence belongs to the polyribonucleotide nucleotidyltransferase family. Requires Mg(2+) as cofactor.

Its subcellular location is the cytoplasm. The catalysed reaction is RNA(n+1) + phosphate = RNA(n) + a ribonucleoside 5'-diphosphate. Its function is as follows. Involved in mRNA degradation. Catalyzes the phosphorolysis of single-stranded polyribonucleotides processively in the 3'- to 5'-direction. The polypeptide is Polyribonucleotide nucleotidyltransferase (Rhodopseudomonas palustris (strain BisA53)).